The sequence spans 312 residues: Cytochrome c biogenesis protein CcsA (312 aa).

The next 8 helical transmembrane spans lie at 9–29 (ILTH…LITF), 44–64 (GIIV…ISSG), 71–91 (LYES…IPYF), 111–131 (GFAT…VPAL), 143–163 (MILG…LLVI), 216–236 (VISL…VWAN), 251–271 (WAFI…NINL), and 277–297 (AIIA…VNLL).

Belongs to the CcmF/CycK/Ccl1/NrfE/CcsA family. May interact with Ccs1.

Its subcellular location is the plastid. The protein localises to the chloroplast thylakoid membrane. Functionally, required during biogenesis of c-type cytochromes (cytochrome c6 and cytochrome f) at the step of heme attachment. The polypeptide is Cytochrome c biogenesis protein CcsA (Atropa belladonna (Belladonna)).